A 585-amino-acid chain; its full sequence is Serine/threonine-protein kinase PknI (585 aa).

Topologically, residues 1–349 are cytoplasmic; sequence MALASGVTFA…ASPTRRRPRR (349 aa). A Protein kinase domain is found at 12–252; sequence YTVVRMLGCS…SCREFADAMN (241 aa). ATP-binding positions include 18-26 and Lys41; that span reads LGCSAMGEV. 3 residues coordinate ADP: Lys41, Asp90, and Val92. Asp137 serves as the catalytic Proton acceptor. The chain crosses the membrane as a helical span at residues 350-370; sequence ILVGAVAVLLLAGLFAVGIVI. Topologically, residues 371–585 are extracellular; it reads GRKTNTTATE…PTTTAPGPGR (215 aa). Residues 546 to 585 form a disordered region; it reads SGDLPPAVTVPDPATIPDTPDTTSTATLTPPTTTAPGPGR. The span at 554–585 shows a compositional bias: low complexity; that stretch reads TVPDPATIPDTPDTTSTATLTPPTTTAPGPGR.

This sequence belongs to the protein kinase superfamily. Ser/Thr protein kinase family. It depends on Mn(2+) as a cofactor. In terms of processing, autophosphorylated at serine and threonine residues.

The protein resides in the cytoplasm. Its subcellular location is the cell membrane. The catalysed reaction is L-seryl-[protein] + ATP = O-phospho-L-seryl-[protein] + ADP + H(+). It carries out the reaction L-threonyl-[protein] + ATP = O-phospho-L-threonyl-[protein] + ADP + H(+). Plays an important role in slowing down the growth of mycobacteria within the infected host. The protein is Serine/threonine-protein kinase PknI (pknI) of Mycobacterium bovis (strain ATCC BAA-935 / AF2122/97).